Consider the following 145-residue polypeptide: D-aminoacyl-tRNA deacylase (145 aa).

The Gly-cisPro motif, important for rejection of L-amino acids motif lies at 137–138 (GP).

It belongs to the DTD family. In terms of assembly, homodimer.

Its subcellular location is the cytoplasm. It catalyses the reaction glycyl-tRNA(Ala) + H2O = tRNA(Ala) + glycine + H(+). It carries out the reaction a D-aminoacyl-tRNA + H2O = a tRNA + a D-alpha-amino acid + H(+). Functionally, an aminoacyl-tRNA editing enzyme that deacylates mischarged D-aminoacyl-tRNAs. Also deacylates mischarged glycyl-tRNA(Ala), protecting cells against glycine mischarging by AlaRS. Acts via tRNA-based rather than protein-based catalysis; rejects L-amino acids rather than detecting D-amino acids in the active site. By recycling D-aminoacyl-tRNA to D-amino acids and free tRNA molecules, this enzyme counteracts the toxicity associated with the formation of D-aminoacyl-tRNA entities in vivo and helps enforce protein L-homochirality. The polypeptide is D-aminoacyl-tRNA deacylase (Pseudoalteromonas atlantica (strain T6c / ATCC BAA-1087)).